Reading from the N-terminus, the 382-residue chain is Telomere-binding protein OPG082 (382 aa).

The protein belongs to the orthopoxvirus OPG082 family.

It is found in the virion. Its function is as follows. Binds to the hairpin form of the viral telomeric sequence. Might direct genome encapsidation into the virus particle. The polypeptide is Telomere-binding protein OPG082 (OPG082) (Homo sapiens (Human)).